Reading from the N-terminus, the 150-residue chain is Endoribonuclease YbeY (150 aa).

Residues His115, His119, and His125 each coordinate Zn(2+).

It belongs to the endoribonuclease YbeY family. Zn(2+) is required as a cofactor.

The protein localises to the cytoplasm. Its function is as follows. Single strand-specific metallo-endoribonuclease involved in late-stage 70S ribosome quality control and in maturation of the 3' terminus of the 16S rRNA. This chain is Endoribonuclease YbeY, found in Aquifex aeolicus (strain VF5).